The chain runs to 108 residues: Hydrogenase expression/formation protein HupN (108 aa).

Residues 88–108 (REPQLPPHLQAQLPPKEPNSP) are disordered.

The protein belongs to the HupF/HypC family.

The protein is Hydrogenase expression/formation protein HupN (hupN) of Azotobacter chroococcum mcd 1.